A 300-amino-acid chain; its full sequence is Iron/alpha-ketoglutarate-dependent dioxygenase okaE (300 aa).

Fe cation-binding residues include histidine 134, aspartate 136, and histidine 210.

Belongs to the PhyH family. As to quaternary structure, homodimer. Fe cation is required as a cofactor.

It catalyses the reaction okaramine A + 2-oxoglutarate + AH2 + O2 = 12-deshydroxyl okaramine E + succinate + A + CO2 + H2O. It carries out the reaction 12-deshydroxyl okaramine E + 2-oxoglutarate + O2 = okaramine E + succinate + CO2. The catalysed reaction is okaramine A + 2-oxoglutarate + O2 = okaramine E + succinate + CO2. It participates in alkaloid biosynthesis. Its pathway is secondary metabolite biosynthesis; terpenoid biosynthesis. In terms of biological role, iron/alpha-ketoglutarate-dependent dioxygenase; part of the gene cluster that mediates the biosynthesis of okaramine B, a prenylated indole alkaloid that possesses an unusual octacyclic ring system, including a four-membered azetidine ring and an eight-membered azocine ring, and that exhibits insecticidal activity against silkworm larvae. Within the pathway, okaE forms the unusual 2-dimethyl-3-methyl-azetidine ring to yield 12-deshydroxyl okaramine E from okaramine A. OkaE also catalyzes the hydroxylation of 12-deshydroxyl okaramine E to produce okaramine E. The biosynthesis begins with the NRPS okaA that condenses two tryptophan molecules into cyclo(L-Trp-L-Trp). Prenylation by the prenyltransferase okaC then leads to the formation of cyclo(N8-(alpha,alpha-dimethylallyl)-L-Trp-6a-(alpha,alpha-dime-thylallyl)-L-Trp). This is followed by indole 2,3-epoxidation by the FAD-dependent monooxygenase okaB to facilitate the formation of the hexahydropyrrolo[2,3-b]indole (HPI) moiety of okaramine C. The cytochrome P450 monooxygenase okaD then likely catalyzes formation of the eight-membered ring of okaramine A. The dioxygenase okaE further forms the unusual 2-dimethyl-3-methyl-azetidine ring to yield 12-deshydroxyl okaramine E, as well as the hydroxylation of 12-deshydroxyl okaramine E to produce okaramine E. The cytochrome P450 monoxygenase okaG converts 12-deshydroxyl okaramine E into 3-desmethyl okaramine B which is further methylated by the methyltransferase okaF into okaramine B. In a shunt pathway, okaG and okaF together are also able to convert okaramine E into okaramine D. Okaramine H is produced by nonenzymatic conversion from okaramine A. The protein is Iron/alpha-ketoglutarate-dependent dioxygenase okaE of Penicillium ochrochloron.